The following is a 298-amino-acid chain: 3-hydroxyisobutyrate dehydrogenase (298 aa).

Residues T2–F30, L65–P66, and T96 contribute to the NAD(+) site. Residue K171 is part of the active site. K246 lines the NAD(+) pocket.

The protein belongs to the HIBADH-related family.

The catalysed reaction is 3-hydroxy-2-methylpropanoate + NAD(+) = 2-methyl-3-oxopropanoate + NADH + H(+). Its pathway is amino-acid degradation; L-valine degradation. This chain is 3-hydroxyisobutyrate dehydrogenase, found in Pseudomonas aeruginosa (strain ATCC 15692 / DSM 22644 / CIP 104116 / JCM 14847 / LMG 12228 / 1C / PRS 101 / PAO1).